A 333-amino-acid chain; its full sequence is Glyceraldehyde-3-phosphate dehydrogenase (333 aa).

Ser1 carries the post-translational modification N-acetylserine. Residues 10–11 (RI), Asp31, and Ser118 each bind NAD(+). D-glyceraldehyde 3-phosphate is bound by residues 147–149 (SCT), Thr178, 207–208 (TG), and Arg230. The active-site Nucleophile is the Cys148. Position 312 (Asn312) interacts with NAD(+).

The protein belongs to the glyceraldehyde-3-phosphate dehydrogenase family. In terms of assembly, homotetramer.

It is found in the cytoplasm. It catalyses the reaction D-glyceraldehyde 3-phosphate + phosphate + NAD(+) = (2R)-3-phospho-glyceroyl phosphate + NADH + H(+). Its pathway is carbohydrate degradation; glycolysis; pyruvate from D-glyceraldehyde 3-phosphate: step 1/5. In Homarus americanus (American lobster), this protein is Glyceraldehyde-3-phosphate dehydrogenase.